The chain runs to 122 residues: MGNVIKSQVGAQALGKNVRVSVTKMQRIIDRIRNCSYEEALVLLEFMPYRACYPVSQLVLSAAANASNNLGLNKSDLFVSKAWVDNSKYLRRFRPRAQGRGYPIKKPTCKVTIQLSSKSIEK.

The protein belongs to the universal ribosomal protein uL22 family. Part of the 50S ribosomal subunit.

The protein localises to the plastid. It localises to the chloroplast. Its function is as follows. This protein binds specifically to 23S rRNA. The globular domain of the protein is located near the polypeptide exit tunnel on the outside of the subunit, while an extended beta-hairpin is found that lines the wall of the exit tunnel in the center of the 70S ribosome. The protein is Large ribosomal subunit protein uL22c (rpl22) of Adiantum capillus-veneris (Maidenhair fern).